The chain runs to 230 residues: CRP-like protein Clp (230 aa).

18 to 139 lines the a nucleoside 3',5'-cyclic phosphate pocket; sequence PSLTLDAGTI…APRILYAIGV (122 aa). Positions 158-230 constitute an HTH crp-type domain; that stretch reads LDVTDRIVRT…GKTVVLYGTR (73 aa). Positions 190-209 form a DNA-binding region, H-T-H motif; that stretch reads RQELARLVGCSREMAGRVLK.

Homodimer.

It is found in the cytoplasm. Allosterically inhibited by cyclic di-GMP (c-di-GMP), which binds to Clp and abolishes its ability to bind its target gene promoter. Its function is as follows. Global transcriptional regulator that regulates virulence factors production by activating or repressing the expression of a large set of genes in diffusible signal factor (DSF) pathway. The protein is CRP-like protein Clp (clp) of Xanthomonas campestris pv. campestris (strain 8004).